Consider the following 716-residue polypeptide: Polyribonucleotide nucleotidyltransferase (716 aa).

The Mg(2+) site is built by Asp490 and Asp496. The region spanning 556-615 is the KH domain; the sequence is PKIETLTIPTDKIREVIGSGGKVIREIVETSGAKVDINDDGVIKIASNDQAAIKKAYDMI. Residues 625-693 enclose the S1 motif domain; that stretch reads GQIYTGKVVK…ERGKVRLGMK (69 aa). Residues 695–716 form a disordered region; that stretch reads VDQETGQEIQPEKKEREEAGEA. Positions 704–716 are enriched in basic and acidic residues; that stretch reads QPEKKEREEAGEA.

It belongs to the polyribonucleotide nucleotidyltransferase family. The cofactor is Mg(2+).

Its subcellular location is the cytoplasm. It carries out the reaction RNA(n+1) + phosphate = RNA(n) + a ribonucleoside 5'-diphosphate. Functionally, involved in mRNA degradation. Catalyzes the phosphorolysis of single-stranded polyribonucleotides processively in the 3'- to 5'-direction. In Cereibacter sphaeroides (strain KD131 / KCTC 12085) (Rhodobacter sphaeroides), this protein is Polyribonucleotide nucleotidyltransferase.